The chain runs to 467 residues: Fumarate hydratase class II (467 aa).

Substrate is bound by residues 98–100 (SGT), Arg126, 129–132 (HPND), 139–141 (SSN), and Thr187. Residue His188 is the Proton donor/acceptor of the active site. Residue Ser318 is part of the active site. Substrate contacts are provided by residues Ser319 and 324–326 (KVN).

It belongs to the class-II fumarase/aspartase family. Fumarase subfamily. Homotetramer.

It is found in the cytoplasm. It carries out the reaction (S)-malate = fumarate + H2O. It functions in the pathway carbohydrate metabolism; tricarboxylic acid cycle; (S)-malate from fumarate: step 1/1. Functionally, involved in the TCA cycle. Catalyzes the stereospecific interconversion of fumarate to L-malate. This is Fumarate hydratase class II from Escherichia coli O6:H1 (strain CFT073 / ATCC 700928 / UPEC).